We begin with the raw amino-acid sequence, 230 residues long: 7-cyano-7-deazaguanine synthase (230 aa).

Position 10–20 (10–20 (LSGGLDSATTA)) interacts with ATP. Cys191, Cys199, Cys202, and Cys205 together coordinate Zn(2+).

The protein belongs to the QueC family. The cofactor is Zn(2+).

It catalyses the reaction 7-carboxy-7-deazaguanine + NH4(+) + ATP = 7-cyano-7-deazaguanine + ADP + phosphate + H2O + H(+). Its pathway is purine metabolism; 7-cyano-7-deazaguanine biosynthesis. Catalyzes the ATP-dependent conversion of 7-carboxy-7-deazaguanine (CDG) to 7-cyano-7-deazaguanine (preQ(0)). The chain is 7-cyano-7-deazaguanine synthase from Gloeothece citriformis (strain PCC 7424) (Cyanothece sp. (strain PCC 7424)).